The primary structure comprises 602 residues: Peptide-N(4)-(N-acetyl-beta-glucosaminyl)asparagine amidase (602 aa).

The Thioredoxin domain maps to 2–130 (PVREVSRLPE…EKKFLERFVG (129 aa)). 4 residues coordinate Zn(2+): cysteine 189, cysteine 192, cysteine 222, and cysteine 225. Residue cysteine 248 is the Nucleophile of the active site. Residues histidine 275 and aspartate 292 contribute to the active site. One can recognise a PAW domain in the interval 400-602 (DMGGRTTGSK…ESMVVRVYMK (203 aa)).

Belongs to the transglutaminase-like superfamily. PNGase family. Requires Zn(2+) as cofactor.

It is found in the cytoplasm. The protein resides in the endoplasmic reticulum. The catalysed reaction is Hydrolysis of an N(4)-(acetyl-beta-D-glucosaminyl)asparagine residue in which the glucosamine residue may be further glycosylated, to yield a (substituted) N-acetyl-beta-D-glucosaminylamine and a peptide containing an aspartate residue.. Specifically deglycosylates the denatured form of N-linked glycoproteins in the cytoplasm and assists their proteasome-mediated degradation. Cleaves the beta-aspartyl-glucosamine (GlcNAc) of the glycan and the amide side chain of Asn, converting Asn to Asp. Prefers proteins containing high-mannose over those bearing complex type oligosaccharides. Can recognize misfolded proteins in the endoplasmic reticulum that are exported to the cytosol to be destroyed and deglycosylate them, while it has no activity toward native proteins. Deglycosylation is a prerequisite for subsequent proteasome-mediated degradation of some, but not all, misfolded glycoproteins. Also displays oxidoreductase (thioredoxin) activity. The chain is Peptide-N(4)-(N-acetyl-beta-glucosaminyl)asparagine amidase (png-1) from Caenorhabditis briggsae.